Consider the following 184-residue polypeptide: dITP/XTP pyrophosphatase (184 aa).

Ser5–Lys10 contributes to the substrate binding site. Residues Glu33 and Asp62 each contribute to the Mg(2+) site. Asp62 (proton acceptor) is an active-site residue. Residues Ser63, Trp136–Asp139, Lys158, and His163–Arg164 contribute to the substrate site.

Belongs to the HAM1 NTPase family. Homodimer. Mg(2+) serves as cofactor.

The enzyme catalyses XTP + H2O = XMP + diphosphate + H(+). It carries out the reaction dITP + H2O = dIMP + diphosphate + H(+). The catalysed reaction is ITP + H2O = IMP + diphosphate + H(+). Pyrophosphatase that catalyzes the hydrolysis of nucleoside triphosphates to their monophosphate derivatives, with a high preference for the non-canonical purine nucleotides XTP (xanthosine triphosphate), dITP (deoxyinosine triphosphate) and ITP. Seems to function as a house-cleaning enzyme that removes non-canonical purine nucleotides from the nucleotide pool, thus preventing their incorporation into DNA/RNA and avoiding chromosomal lesions. The sequence is that of dITP/XTP pyrophosphatase from Korarchaeum cryptofilum (strain OPF8).